A 193-amino-acid chain; its full sequence is AP-3 complex subunit sigma-2 (193 aa).

It belongs to the adaptor complexes small subunit family. Adaptor protein complex 3 (AP-3) is a heterotetramer composed of two large adaptins (delta-type subunit AP3D1 and beta-type subunit AP3B1 or AP3B2), a medium adaptin (mu-type subunit AP3M1 or AP3M2) and a small adaptin (sigma-type subunit APS1 or AP3S2). Interacts with AGAP1. AP-3 associates with the BLOC-1 complex.

The protein resides in the golgi apparatus. The protein localises to the cytoplasmic vesicle membrane. Its function is as follows. Part of the AP-3 complex, an adaptor-related complex which is not clathrin-associated. The complex is associated with the Golgi region as well as more peripheral structures. It facilitates the budding of vesicles from the Golgi membrane and may be directly involved in trafficking to lysosomes. In concert with the BLOC-1 complex, AP-3 is required to target cargos into vesicles assembled at cell bodies for delivery into neurites and nerve terminals. The polypeptide is AP-3 complex subunit sigma-2 (AP3S2) (Bos taurus (Bovine)).